We begin with the raw amino-acid sequence, 310 residues long: 4-hydroxyproline epimerase (310 aa).

Cys-88 acts as the Proton acceptor in catalysis. Substrate contacts are provided by residues 89–90 (GH), His-208, and Asp-232. The active-site Proton donor is Cys-236. Substrate is bound at residue 237-238 (GT).

It belongs to the proline racemase family. As to quaternary structure, homodimer.

It carries out the reaction trans-4-hydroxy-L-proline = cis-4-hydroxy-D-proline. Inhibited by iodoacetate, iodoacetamide and by high amounts (10 mM) of pyrrole-2-carboxylic acid (PYC). Not inhibited by PYC at 1 mM. In terms of biological role, allows intracellular utilization of 4-hydroxyproline, one of the major constituents of host collagen, by converting 4-hydroxy-L-proline to 4-hydroxy-D-proline, which can be further metabolized by intracellular 4-hydroxy-D-proline oxidases. The polypeptide is 4-hydroxyproline epimerase (Burkholderia pseudomallei (strain K96243)).